The following is a 143-amino-acid chain: Large ribosomal subunit protein uL11 (143 aa).

This sequence belongs to the universal ribosomal protein uL11 family. As to quaternary structure, part of the ribosomal stalk of the 50S ribosomal subunit. Interacts with L10 and the large rRNA to form the base of the stalk. L10 forms an elongated spine to which L12 dimers bind in a sequential fashion forming a multimeric L10(L12)X complex. One or more lysine residues are methylated.

Forms part of the ribosomal stalk which helps the ribosome interact with GTP-bound translation factors. This chain is Large ribosomal subunit protein uL11, found in Burkholderia mallei (strain NCTC 10247).